Here is a 256-residue protein sequence, read N- to C-terminus: UPF0246 protein PG_1544 (256 aa).

It belongs to the UPF0246 family.

This Porphyromonas gingivalis (strain ATCC BAA-308 / W83) protein is UPF0246 protein PG_1544.